The chain runs to 246 residues: tRNA (guanine-N(7)-)-methyltransferase (246 aa).

Positions 1–26 (MSDSSSSSENAPATPESPGRPPRGIK) are disordered. Glutamate 74, glutamate 99, aspartate 126, and aspartate 149 together coordinate S-adenosyl-L-methionine. The active site involves aspartate 149. Residues lysine 153, aspartate 185, and 224–227 (TKFE) each bind substrate.

It belongs to the class I-like SAM-binding methyltransferase superfamily. TrmB family.

It catalyses the reaction guanosine(46) in tRNA + S-adenosyl-L-methionine = N(7)-methylguanosine(46) in tRNA + S-adenosyl-L-homocysteine. Its pathway is tRNA modification; N(7)-methylguanine-tRNA biosynthesis. Its function is as follows. Catalyzes the formation of N(7)-methylguanine at position 46 (m7G46) in tRNA. In Chromohalobacter salexigens (strain ATCC BAA-138 / DSM 3043 / CIP 106854 / NCIMB 13768 / 1H11), this protein is tRNA (guanine-N(7)-)-methyltransferase.